We begin with the raw amino-acid sequence, 368 residues long: F-box/kelch-repeat protein At2g44700 (368 aa).

Positions 1 to 23 (MSSSNEPPRKTDQPSSSSASASA) are disordered. Residues 14-23 (PSSSSASASA) are compositionally biased toward low complexity. In terms of domain architecture, F-box spans 25–71 (PSLFLSLPLEIISMILARVPKRYYPILCSVSKNMRSLVRSPEIHKAR). Residues 177–221 (KVYVIGGYQDDEIAAESFDLNTQTWEAAPIPDEKESHRWICKANV) form a Kelch repeat.

The protein is F-box/kelch-repeat protein At2g44700 of Arabidopsis thaliana (Mouse-ear cress).